The following is a 384-amino-acid chain: F-box protein At2g07140 (384 aa).

The region spanning 1 to 46 is the F-box domain; it reads MTLPELPKDLVEEILSFVPATSLKRLRSTCKGWNRLFKDDKRFTRI.

The sequence is that of F-box protein At2g07140 from Arabidopsis thaliana (Mouse-ear cress).